Here is a 272-residue protein sequence, read N- to C-terminus: Cerberus (272 aa).

A signal peptide spans 1-19 (MSLLLLQLLVLSCLGDTEP). Cystine bridges form between C168/C215, C182/C229, C192/C245, and C196/C247. The 86-residue stretch at 168–253 (CRTLPFSQSV…ECNCETQKIE (86 aa)) folds into the CTCK domain. N-linked (GlcNAc...) asparagine glycosylation is present at N228.

It belongs to the DAN family.

It is found in the secreted. Its function is as follows. Cytokine that acts as a regulator of the activity of Nodal/BMP pathways during the establishment of bilateral asymmetry in the head and trunk of the embryo. In Gallus gallus (Chicken), this protein is Cerberus (CER1).